The sequence spans 423 residues: Glutamate-1-semialdehyde 2,1-aminomutase (423 aa).

Position 266 is an N6-(pyridoxal phosphate)lysine (lysine 266).

The protein belongs to the class-III pyridoxal-phosphate-dependent aminotransferase family. HemL subfamily. Homodimer. Pyridoxal 5'-phosphate is required as a cofactor.

It localises to the cytoplasm. It carries out the reaction (S)-4-amino-5-oxopentanoate = 5-aminolevulinate. Its pathway is porphyrin-containing compound metabolism; protoporphyrin-IX biosynthesis; 5-aminolevulinate from L-glutamyl-tRNA(Glu): step 2/2. The polypeptide is Glutamate-1-semialdehyde 2,1-aminomutase (Desulfovibrio desulfuricans (strain ATCC 27774 / DSM 6949 / MB)).